A 146-amino-acid polypeptide reads, in one-letter code: Hemoglobin subunit beta (146 aa).

Valine 1 carries the post-translational modification N-acetylvaline. A Globin domain is found at 2 to 146 (HLTPEEKNAV…VANALAHKYH (145 aa)). Threonine 12 carries the phosphothreonine modification. Residue serine 44 is modified to Phosphoserine. The residue at position 59 (lysine 59) is an N6-acetyllysine. Histidine 63 lines the heme b pocket. Lysine 82 bears the N6-acetyllysine mark. Heme b is bound at residue histidine 92. At cysteine 93 the chain carries S-nitrosocysteine. An N6-acetyllysine modification is found at lysine 144.

The protein belongs to the globin family. In terms of assembly, heterotetramer of two alpha chains and two beta chains. Red blood cells.

Involved in oxygen transport from the lung to the various peripheral tissues. In Macaca mulatta (Rhesus macaque), this protein is Hemoglobin subunit beta (HBB).